Consider the following 288-residue polypeptide: ATP phosphoribosyltransferase (288 aa).

Belongs to the ATP phosphoribosyltransferase family. Long subfamily. The cofactor is Mg(2+).

Its subcellular location is the cytoplasm. The catalysed reaction is 1-(5-phospho-beta-D-ribosyl)-ATP + diphosphate = 5-phospho-alpha-D-ribose 1-diphosphate + ATP. It participates in amino-acid biosynthesis; L-histidine biosynthesis; L-histidine from 5-phospho-alpha-D-ribose 1-diphosphate: step 1/9. Its activity is regulated as follows. Feedback inhibited by histidine. Its function is as follows. Catalyzes the condensation of ATP and 5-phosphoribose 1-diphosphate to form N'-(5'-phosphoribosyl)-ATP (PR-ATP). Has a crucial role in the pathway because the rate of histidine biosynthesis seems to be controlled primarily by regulation of HisG enzymatic activity. The polypeptide is ATP phosphoribosyltransferase (Methanococcus maripaludis (strain C6 / ATCC BAA-1332)).